We begin with the raw amino-acid sequence, 180 residues long: Large ribosomal subunit protein uL6 (180 aa).

This sequence belongs to the universal ribosomal protein uL6 family. In terms of assembly, part of the 50S ribosomal subunit.

In terms of biological role, this protein binds to the 23S rRNA, and is important in its secondary structure. It is located near the subunit interface in the base of the L7/L12 stalk, and near the tRNA binding site of the peptidyltransferase center. The chain is Large ribosomal subunit protein uL6 from Salinispora arenicola (strain CNS-205).